The sequence spans 830 residues: Cadherin-16 (830 aa).

The first 21 residues, methionine 1–alanine 21, serve as a signal peptide directing secretion. At glutamine 22 to alanine 788 the chain is on the extracellular side. 6 Cadherin domains span residues leucine 27–phenylalanine 128, tyrosine 133–glutamate 237, glutamate 244–cysteine 338, proline 343–phenylalanine 451, glycine 457–leucine 566, and tyrosine 571–leucine 667. Residues asparagine 519, asparagine 604, and asparagine 724 are each glycosylated (N-linked (GlcNAc...) asparagine). The interval threonine 668–alanine 788 is ectodomain G. A helical membrane pass occupies residues valine 789–histidine 809. At leucine 810–valine 830 the chain is on the cytoplasmic side. Serine 823 carries the post-translational modification Phosphoserine.

In terms of tissue distribution, kidney specific.

The protein localises to the cell membrane. In terms of biological role, cadherins are calcium-dependent cell adhesion proteins. They preferentially interact with themselves in a homophilic manner in connecting cells; cadherins may thus contribute to the sorting of heterogeneous cell types. The polypeptide is Cadherin-16 (Cdh16) (Mus musculus (Mouse)).